Consider the following 214-residue polypeptide: Orotate phosphoribosyltransferase (214 aa).

5-phospho-alpha-D-ribose 1-diphosphate is bound at residue lysine 26. Residue 34-35 coordinates orotate; that stretch reads FF. 5-phospho-alpha-D-ribose 1-diphosphate contacts are provided by residues 72–73, arginine 98, lysine 99, lysine 102, histidine 104, and 123–131; these read YK and DDVISAGTS. Residues serine 127 and arginine 155 each coordinate orotate.

It belongs to the purine/pyrimidine phosphoribosyltransferase family. PyrE subfamily. Homodimer. It depends on Mg(2+) as a cofactor.

The catalysed reaction is orotidine 5'-phosphate + diphosphate = orotate + 5-phospho-alpha-D-ribose 1-diphosphate. Its pathway is pyrimidine metabolism; UMP biosynthesis via de novo pathway; UMP from orotate: step 1/2. Catalyzes the transfer of a ribosyl phosphate group from 5-phosphoribose 1-diphosphate to orotate, leading to the formation of orotidine monophosphate (OMP). This chain is Orotate phosphoribosyltransferase, found in Chromobacterium violaceum (strain ATCC 12472 / DSM 30191 / JCM 1249 / CCUG 213 / NBRC 12614 / NCIMB 9131 / NCTC 9757 / MK).